Consider the following 104-residue polypeptide: Vegetative-specific protein H7 (104 aa).

Positions 43–97 constitute an HTH cro/C1-type domain; sequence IQRARNALKMTQKELAFKINERPGVINEYESGSAIPSQAVLSKLEKALNVKLRGK. Residues 54 to 73 constitute a DNA-binding region (H-T-H motif); sequence QKELAFKINERPGVINEYES.

This chain is Vegetative-specific protein H7 (cinD-1), found in Dictyostelium discoideum (Social amoeba).